We begin with the raw amino-acid sequence, 955 residues long: Protein translocase subunit SecA (955 aa).

Residues Gln87, 105-109, and Asp494 each bind ATP; that span reads GEGKT. Residues 861-955 form a disordered region; it reads AAPAPAAPRP…KKAPRTKRKR (95 aa). Residues 874 to 888 are compositionally biased toward low complexity; it reads QEAAQQAQGTAAPSA. A compositionally biased stretch (basic residues) spans 943-955; that stretch reads SKGKKAPRTKRKR.

It belongs to the SecA family. Monomer and homodimer. Part of the essential Sec protein translocation apparatus which comprises SecA, SecYEG and auxiliary proteins SecDF. Other proteins may also be involved.

It is found in the cell membrane. Its subcellular location is the cytoplasm. The enzyme catalyses ATP + H2O + cellular proteinSide 1 = ADP + phosphate + cellular proteinSide 2.. In terms of biological role, part of the Sec protein translocase complex. Interacts with the SecYEG preprotein conducting channel. Has a central role in coupling the hydrolysis of ATP to the transfer of proteins into and across the cell membrane, serving as an ATP-driven molecular motor driving the stepwise translocation of polypeptide chains across the membrane. In Rhodococcus opacus (strain B4), this protein is Protein translocase subunit SecA.